Consider the following 851-residue polypeptide: Transcriptional regulator RFX1 (851 aa).

2 stretches are compositionally biased toward polar residues: residues 1-11 and 20-34; these read MSSDQTPQNRN and PRLQQQTSQIPSTGP. Disordered regions lie at residues 1 to 121, 134 to 170, and 195 to 230; these read MSSD…EPHP, QSQFQFDYSSPYIGQSQSQSQSQSQAQPQPHPQPQTY, and HEASSADNDSATNITTPQKRKKQKRSESVTPNTGEN. Basic and acidic residues predominate over residues 38–53; sequence QQRERSQEQESDHEHQ. Positions 54-84 are enriched in low complexity; that stretch reads QAQQHLHQFQQSNLTPSTTAFPSSTSIPTFS. Residues 85–114 are compositionally biased toward polar residues; sequence KQDQGYHNQFSSPQSSYRKIGNFAQSSNAP. Positions 141-170 are enriched in low complexity; sequence YSSPYIGQSQSQSQSQSQAQPQPHPQPQTY. The span at 199–211 shows a compositional bias: polar residues; sequence SADNDSATNITTP. The segment at residues 282–357 is a DNA-binding region (RFX-type winged-helix); the sequence is GMVWLLNSCD…YHYCGIKLTG (76 aa). Disordered stretches follow at residues 368 to 411 and 783 to 806; these read YQQK…SVSY and PPSLSSLPQTQQQNPVIQEETGTQ. Residues 384–393 show a composition bias toward polar residues; that stretch reads AQVGSSTSSA. Residues 783 to 797 show a composition bias toward low complexity; that stretch reads PPSLSSLPQTQQQNP.

This sequence belongs to the RFX family.

The protein localises to the nucleus. In terms of biological role, transcription factor involved in DNA damage responses, morphogenesis, and virulence. The chain is Transcriptional regulator RFX1 (RFX1) from Candida albicans (strain SC5314 / ATCC MYA-2876) (Yeast).